We begin with the raw amino-acid sequence, 130 residues long: Large ribosomal subunit protein bL20 (130 aa).

This sequence belongs to the bacterial ribosomal protein bL20 family.

Functionally, binds directly to 23S ribosomal RNA and is necessary for the in vitro assembly process of the 50S ribosomal subunit. It is not involved in the protein synthesizing functions of that subunit. The chain is Large ribosomal subunit protein bL20 from Clavibacter sepedonicus (Clavibacter michiganensis subsp. sepedonicus).